The chain runs to 635 residues: ATP-dependent zinc metalloprotease FtsH (635 aa).

The Cytoplasmic portion of the chain corresponds to 1 to 4; that stretch reads MVKN. The helical transmembrane segment at 5–25 threads the bilayer; sequence LVLWVVVAVIMMTAYQSFNSS. Topologically, residues 26 to 97 are periplasmic; that stretch reads SVENSTDYTT…VEGTPFERRG (72 aa). A helical membrane pass occupies residues 98–118; it reads FLSQILISWFPMLFLVGVWVF. At 119-635 the chain is on the cytoplasmic side; it reads FMRQMQGGGG…AVENTDDFNV (517 aa). 191 to 198 provides a ligand contact to ATP; sequence GPPGTGKT. Histidine 413 is a binding site for Zn(2+). Residue glutamate 414 is part of the active site. The Zn(2+) site is built by histidine 417 and aspartate 491. Positions 593-635 are disordered; it reads NREPVTPPSGWGEPKTQQAAYANSTTNDTKPESAVENTDDFNV. Positions 607–620 are enriched in polar residues; the sequence is KTQQAAYANSTTND.

It in the central section; belongs to the AAA ATPase family. In the C-terminal section; belongs to the peptidase M41 family. Homohexamer. Zn(2+) serves as cofactor.

Its subcellular location is the cell inner membrane. Functionally, acts as a processive, ATP-dependent zinc metallopeptidase for both cytoplasmic and membrane proteins. Plays a role in the quality control of integral membrane proteins. This chain is ATP-dependent zinc metalloprotease FtsH, found in Haemophilus influenzae (strain ATCC 51907 / DSM 11121 / KW20 / Rd).